The sequence spans 646 residues: Threonine--tRNA ligase (646 aa).

The TGS domain maps to 1 to 61 (MIKITFPDGS…NEDADFVLYK (61 aa)). The interval 242-541 (DHRKIGKEMQ…LIEHTAGKFP (300 aa)) is catalytic. Zn(2+)-binding residues include cysteine 337, histidine 388, and histidine 518.

It belongs to the class-II aminoacyl-tRNA synthetase family. As to quaternary structure, homodimer. The cofactor is Zn(2+).

The protein resides in the cytoplasm. It carries out the reaction tRNA(Thr) + L-threonine + ATP = L-threonyl-tRNA(Thr) + AMP + diphosphate + H(+). Its function is as follows. Catalyzes the attachment of threonine to tRNA(Thr) in a two-step reaction: L-threonine is first activated by ATP to form Thr-AMP and then transferred to the acceptor end of tRNA(Thr). Also edits incorrectly charged L-seryl-tRNA(Thr). The chain is Threonine--tRNA ligase from Bacteroides thetaiotaomicron (strain ATCC 29148 / DSM 2079 / JCM 5827 / CCUG 10774 / NCTC 10582 / VPI-5482 / E50).